The primary structure comprises 124 residues: MPTIQQLVRKGRRDKIGKVKTAALKGSPQRRGVCTRVYTTTPKKPNSALRKVARVKLTSQVEVTAYIPGEGHNLQEHSMVLVRGGRVKDLPGVRYKIIRGSLDTQGVKNRKQARSRYGAKKEKS.

3-methylthioaspartic acid is present on Asp-89. The disordered stretch occupies residues 105-124; the sequence is QGVKNRKQARSRYGAKKEKS. Residues 108–118 show a composition bias toward basic residues; it reads KNRKQARSRYG.

The protein belongs to the universal ribosomal protein uS12 family. In terms of assembly, part of the 30S ribosomal subunit. Contacts proteins S8 and S17. May interact with IF1 in the 30S initiation complex.

In terms of biological role, with S4 and S5 plays an important role in translational accuracy. Interacts with and stabilizes bases of the 16S rRNA that are involved in tRNA selection in the A site and with the mRNA backbone. Located at the interface of the 30S and 50S subunits, it traverses the body of the 30S subunit contacting proteins on the other side and probably holding the rRNA structure together. The combined cluster of proteins S8, S12 and S17 appears to hold together the shoulder and platform of the 30S subunit. The sequence is that of Small ribosomal subunit protein uS12 from Mycobacterium avium (strain 104).